A 379-amino-acid chain; its full sequence is ATP phosphoribosyltransferase regulatory subunit (379 aa).

The protein belongs to the class-II aminoacyl-tRNA synthetase family. HisZ subfamily. As to quaternary structure, heteromultimer composed of HisG and HisZ subunits.

The protein localises to the cytoplasm. It functions in the pathway amino-acid biosynthesis; L-histidine biosynthesis; L-histidine from 5-phospho-alpha-D-ribose 1-diphosphate: step 1/9. Functionally, required for the first step of histidine biosynthesis. May allow the feedback regulation of ATP phosphoribosyltransferase activity by histidine. In Caldanaerobacter subterraneus subsp. tengcongensis (strain DSM 15242 / JCM 11007 / NBRC 100824 / MB4) (Thermoanaerobacter tengcongensis), this protein is ATP phosphoribosyltransferase regulatory subunit.